The primary structure comprises 246 residues: E3 ubiquitin-protein ligase RNF182 (246 aa).

Residues 22-70 (CKICYNRYNLRQRKPKVLGCCHRVCAKCLYKLVDCGESPQCVIVCPFCR) form an RING-type zinc finger. 2 helical membrane-spanning segments follow: residues 184–204 (VFVW…IYLL) and 211–231 (LGVV…IYGF).

As to quaternary structure, interacts with ATP6V0C.

Its subcellular location is the membrane. The protein localises to the cytoplasm. The catalysed reaction is S-ubiquitinyl-[E2 ubiquitin-conjugating enzyme]-L-cysteine + [acceptor protein]-L-lysine = [E2 ubiquitin-conjugating enzyme]-L-cysteine + N(6)-ubiquitinyl-[acceptor protein]-L-lysine.. The protein operates within protein modification; protein ubiquitination. Functionally, E3 ubiquitin-protein ligase that mediates the ubiquitination of atp6v0c and targets it to degradation via the ubiquitin-proteasome pathway. This chain is E3 ubiquitin-protein ligase RNF182 (rnf182), found in Xenopus laevis (African clawed frog).